Reading from the N-terminus, the 283-residue chain is Circadian clock oscillator protein KaiA (283 aa).

The tract at residues 3 to 133 is psR domain, binds oxidized quinones; it reads QSTALTICGL…VKLCPGCAVP (131 aa). The KaiA N-terminal domain maps to 3–163; sequence QSTALTICGL…RLSQKLKERL (161 aa). Residues 164–172 form a flexible linker region; that stretch reads GYLGVYYKR. The 109-residue stretch at 173-281 folds into the KaiA C-terminal domain; sequence DTAFFFRRMS…CEMYRRSIPR (109 aa).

As to quaternary structure, homodimer. The KaiABC complex composition changes during the circadian cycle to control KaiC phosphorylation. Complexes KaiC(6), KaiA(2-4):KaiC(6), KaiB(6):KaiC(6) and KaiC(6):KaiB(6):KaiA(12) are among the most important forms, many form cooperatively. KaiA and CikA bind to the same region of the KaiB(fs) form and therefore compete.

Its function is as follows. Key component of the KaiABC oscillator complex, which constitutes the main circadian regulator in cyanobacteria. Complex composition changes during the circadian cycle to control KaiC phosphorylation. KaiA stimulates KaiC autophosphorylation, while KaiB sequesters KaiA, leading to KaiC autodephosphorylation. KaiA binding to the KaiC CII domain during the subjective day yields KaiA(2-4):KaiC(6) complexes which stimulate KaiC autophosphorylation. Phospho-Ser-431 KaiC accumulation triggers binding of KaiB during the subjective night to form the KaiB(6):KaiC(6) complex, leading to changes in the output regulators CikA and SasA. KaiB(6):KaiC(6) formation exposes a site for KaiA binding on KaiB that sequesters KaiA from KaiC's CII domain, making the KaiC(6):KaiB(6):KaiA(12) complex resulting in KaiC autodephosphorylation. Complete dephosphorylation of KaiC leads to dissociation of KaiA(2):KaiB(1), completing 1 cycle of the Kai oscillator. In terms of biological role, binds oxidized quinones via the N-terminal PsR domain, allowing it to sense redox changes and possibly mediate clock input. The sequence is that of Circadian clock oscillator protein KaiA from Thermostichus vulcanus (Synechococcus vulcanus).